Here is a 472-residue protein sequence, read N- to C-terminus: Aspartyl/glutamyl-tRNA(Asn/Gln) amidotransferase subunit B (472 aa).

Belongs to the GatB/GatE family. GatB subfamily. In terms of assembly, heterotrimer of A, B and C subunits.

It catalyses the reaction L-glutamyl-tRNA(Gln) + L-glutamine + ATP + H2O = L-glutaminyl-tRNA(Gln) + L-glutamate + ADP + phosphate + H(+). The catalysed reaction is L-aspartyl-tRNA(Asn) + L-glutamine + ATP + H2O = L-asparaginyl-tRNA(Asn) + L-glutamate + ADP + phosphate + 2 H(+). Functionally, allows the formation of correctly charged Asn-tRNA(Asn) or Gln-tRNA(Gln) through the transamidation of misacylated Asp-tRNA(Asn) or Glu-tRNA(Gln) in organisms which lack either or both of asparaginyl-tRNA or glutaminyl-tRNA synthetases. The reaction takes place in the presence of glutamine and ATP through an activated phospho-Asp-tRNA(Asn) or phospho-Glu-tRNA(Gln). The sequence is that of Aspartyl/glutamyl-tRNA(Asn/Gln) amidotransferase subunit B from Mycoplasmopsis agalactiae (strain NCTC 10123 / CIP 59.7 / PG2) (Mycoplasma agalactiae).